Here is a 237-residue protein sequence, read N- to C-terminus: Ribose-5-phosphate isomerase A (237 aa).

Residues S30–T33, D87–D90, and K100–G103 contribute to the substrate site. Catalysis depends on E109, which acts as the Proton acceptor. Substrate is bound at residue K127.

This sequence belongs to the ribose 5-phosphate isomerase family. Homodimer.

It carries out the reaction aldehydo-D-ribose 5-phosphate = D-ribulose 5-phosphate. It participates in carbohydrate degradation; pentose phosphate pathway; D-ribose 5-phosphate from D-ribulose 5-phosphate (non-oxidative stage): step 1/1. Catalyzes the reversible conversion of ribose-5-phosphate to ribulose 5-phosphate. The sequence is that of Ribose-5-phosphate isomerase A from Synechococcus sp. (strain RCC307).